We begin with the raw amino-acid sequence, 159 residues long: Endoribonuclease YbeY (159 aa).

3 residues coordinate Zn(2+): His-120, His-124, and His-130.

Belongs to the endoribonuclease YbeY family. Zn(2+) serves as cofactor.

It localises to the cytoplasm. In terms of biological role, single strand-specific metallo-endoribonuclease involved in late-stage 70S ribosome quality control and in maturation of the 3' terminus of the 16S rRNA. This chain is Endoribonuclease YbeY, found in Parafrankia sp. (strain EAN1pec).